Here is a 1460-residue protein sequence, read N- to C-terminus: Ankyrin repeat-containing protein kinase A (1460 aa).

Disordered regions lie at residues 1-32 (MSIK…NINI), 57-181 (IKQQ…HKSH), 216-259 (RENE…ASST), 272-311 (STSN…VEFD), 329-354 (SSPS…TSTS), 374-510 (FTPS…SSNP), and 551-608 (CPSA…SSIP). Low complexity-rich tracts occupy residues 8 to 32 (SNIN…NINI), 61 to 86 (SNNN…PTSH), and 111 to 128 (SSGS…NNNN). A compositionally biased stretch (polar residues) spans 129–140 (QIKTSNGMNKPN). Basic and acidic residues predominate over residues 149–162 (KPRENSQNKIDDNK). Composition is skewed to low complexity over residues 220–259 (NNNN…ASST) and 272–300 (STSN…RSTS). 2 stretches are compositionally biased toward polar residues: residues 329–345 (SSPS…VHMP) and 384–404 (PTNS…TIQP). Positions 405-422 (SSLDSSSESVSDGLQSVS) are enriched in low complexity. Positions 423 to 434 (GSPVTASPSPTI) are enriched in polar residues. A compositionally biased stretch (low complexity) spans 435–461 (SNNTNATTTNNNNNTNTNNNNNNNNNQ). Basic residues predominate over residues 462-472 (HNHHHHQHSHS). Residues 467 to 667 (HQHSHSQQHD…IFRGCGIPLD (201 aa)) form an interaction with 14-3-3 protein region. Over residues 486–497 (PSSPTSPTLLPS) the composition is skewed to low complexity. The Phorbol-ester/DAG-type zinc finger occupies 499 to 551 (THDFSSEYSSNPGGKCAICRKPLWSFPISDKSRRCRDCSLVVHRACVPLATEC). A compositionally biased stretch (polar residues) spans 559–568 (SKLSVPNGNQ). The span at 569 to 608 (SNSSSSSSSSSSSSSSSNSSSSNTKGHSRTPSSPSVSSIP) shows a compositional bias: low complexity. Positions 653 to 724 (RDFHFIFRGC…SNIASIEKRS (72 aa)) constitute a GRAM domain. ANK repeat units follow at residues 814 to 843 (SKEI…QVNS), 852 to 883 (KGYT…RVRE), 887 to 920 (DGNT…NINE), 924 to 955 (NGET…NVNI), and 959 to 988 (AGES…DPTI). The region spanning 1112-1375 (LEYTEKIGSG…ATEAMTALAV (264 aa)) is the Protein kinase domain. ATP-binding positions include 1118-1126 (IGSGASGKV) and Lys1139. Asp1231 functions as the Proton acceptor in the catalytic mechanism. A helical membrane pass occupies residues 1293–1313 (MGIVMWEIVYCVVYGCYMIPY). Positions 1425-1460 (PEEEQIYQEAMEKQRRNQEASANRNQKNKELLNNNN) form a coiled coil. Residues 1434–1460 (AMEKQRRNQEASANRNQKNKELLNNNN) form a disordered region.

Belongs to the protein kinase superfamily. TKL Ser/Thr protein kinase family.

The protein localises to the cytoplasm. It is found in the cytoskeleton. It localises to the membrane. The protein resides in the nucleus. It carries out the reaction L-seryl-[protein] + ATP = O-phospho-L-seryl-[protein] + ADP + H(+). The enzyme catalyses L-threonyl-[protein] + ATP = O-phospho-L-threonyl-[protein] + ADP + H(+). Functionally, involved in the development of the fruiting body. Overexpression phenocopies the spnA null phenotype. This is Ankyrin repeat-containing protein kinase A (arkA) from Dictyostelium discoideum (Social amoeba).